Reading from the N-terminus, the 252-residue chain is Receptor expression-enhancing protein 3-B (252 aa).

The next 3 helical transmembrane spans lie at 1 to 21 (MVSGMICKAVVLVFGILYPAY), 35 to 55 (YVRWMMYWIVFALYTVTETIA), and 57 to 77 (LTVSWFPLYFELKIAFVVWLL). The tract at residues 163–225 (ETAETRFFPD…GLRRSQSMRS (63 aa)) is disordered. Acidic residues predominate over residues 198 to 211 (RTDEDVEVNSEDEV).

Belongs to the DP1 family.

The protein localises to the endoplasmic reticulum membrane. Functionally, microtubule-binding protein required to ensure proper cell division and nuclear envelope reassembly by sequestering the endoplasmic reticulum away from chromosomes during mitosis. Probably acts by clearing the endoplasmic reticulum membrane from metaphase chromosomes. This chain is Receptor expression-enhancing protein 3-B (reep3-b), found in Xenopus laevis (African clawed frog).